A 300-amino-acid chain; its full sequence is Zinc finger protein RME1 (300 aa).

Residues 80–90 (QAYDSTSSTEE) show a composition bias toward polar residues. The disordered stretch occupies residues 80-100 (QAYDSTSSTEEGTAPQLRPDE). C2H2-type zinc fingers lie at residues 178 to 199 (YHCSHCSEKFATLVEFAAHLDE), 206 to 234 (CKCPIEQCPWKILGFQQATGLRRHCASQH), and 256 to 281 (LNCPFPICQKTFRRKDAYKRHVAMVH).

It is found in the nucleus. Its function is as follows. Involved in the control of meiosis. Represses the transcription of the IME1 gene thereby inhibiting cells from entering meiosis. But also activates the CLN2 gene thus promoting mitosis. The chain is Zinc finger protein RME1 (RME1) from Saccharomyces cerevisiae (strain ATCC 204508 / S288c) (Baker's yeast).